A 74-amino-acid chain; its full sequence is Alpha-elapitoxin-Aa2d (74 aa).

Cystine bridges form between cysteine 3/cysteine 21, cysteine 14/cysteine 42, cysteine 27/cysteine 31, cysteine 46/cysteine 57, and cysteine 58/cysteine 63.

This sequence belongs to the three-finger toxin family. Long-chain subfamily. Type II alpha-neurotoxin sub-subfamily. In terms of tissue distribution, expressed by the venom gland.

Its subcellular location is the secreted. Binds with high affinity to muscular (alpha-1/CHRNA1) and neuronal (alpha-7/CHRNA7) nicotinic acetylcholine receptor (nAChR) and inhibits acetylcholine from binding to the receptor, thereby impairing neuromuscular and neuronal transmission. This is Alpha-elapitoxin-Aa2d from Acanthophis antarcticus (Common death adder).